The sequence spans 506 residues: Maturase K (506 aa).

This sequence belongs to the intron maturase 2 family. MatK subfamily.

The protein localises to the plastid. It localises to the chloroplast. Its function is as follows. Usually encoded in the trnK tRNA gene intron. Probably assists in splicing its own and other chloroplast group II introns. The chain is Maturase K from Trifolium subterraneum (Subterranean clover).